Here is a 190-residue protein sequence, read N- to C-terminus: Small ribosomal subunit protein uS5 (190 aa).

Residues 22–85 (FVDKLVHINR…ESAKRNLTRV (64 aa)) enclose the S5 DRBM domain.

It belongs to the universal ribosomal protein uS5 family. Part of the 30S ribosomal subunit. Contacts proteins S4 and S8.

With S4 and S12 plays an important role in translational accuracy. In terms of biological role, located at the back of the 30S subunit body where it stabilizes the conformation of the head with respect to the body. This chain is Small ribosomal subunit protein uS5, found in Rhodopseudomonas palustris (strain BisB18).